A 535-amino-acid polypeptide reads, in one-letter code: Probable lipid II flippase MurJ (535 aa).

A run of 12 helical transmembrane segments spans residues 90-110 (VLFT…PFIV), 131-151 (FATI…MAGM), 159-179 (FAAA…LAYA), 192-212 (DLSW…WVAV), 233-253 (LLVL…NLLI), 274-294 (IYQL…LPEL), 316-336 (FTLF…EPIV), 350-370 (TVVV…FVLI), 388-408 (IFAG…FPSL), 413-433 (IATA…ATLV), 451-471 (LVIA…WLAF), and 484-504 (LTLC…AFGI).

It belongs to the MurJ/MviN family.

Its subcellular location is the cell inner membrane. The protein operates within cell wall biogenesis; peptidoglycan biosynthesis. Involved in peptidoglycan biosynthesis. Transports lipid-linked peptidoglycan precursors from the inner to the outer leaflet of the cytoplasmic membrane. This is Probable lipid II flippase MurJ from Rhizobium meliloti (strain 1021) (Ensifer meliloti).